The following is a 362-amino-acid chain: Protein RecA (362 aa).

77 to 84 (GPESSGKT) is an ATP binding site.

The protein belongs to the RecA family.

It localises to the cytoplasm. Its function is as follows. Can catalyze the hydrolysis of ATP in the presence of single-stranded DNA, the ATP-dependent uptake of single-stranded DNA by duplex DNA, and the ATP-dependent hybridization of homologous single-stranded DNAs. It interacts with LexA causing its activation and leading to its autocatalytic cleavage. This Rhizobium etli (strain ATCC 51251 / DSM 11541 / JCM 21823 / NBRC 15573 / CFN 42) protein is Protein RecA.